The following is a 197-amino-acid chain: Probable molybdenum cofactor guanylyltransferase (197 aa).

Residues 6–8, Lys18, Asp65, and Asp97 each bind GTP; that span reads LAG. Asp97 contacts Mg(2+).

Belongs to the MobA family. It depends on Mg(2+) as a cofactor.

The protein localises to the cytoplasm. It carries out the reaction Mo-molybdopterin + GTP + H(+) = Mo-molybdopterin guanine dinucleotide + diphosphate. Transfers a GMP moiety from GTP to Mo-molybdopterin (Mo-MPT) cofactor (Moco or molybdenum cofactor) to form Mo-molybdopterin guanine dinucleotide (Mo-MGD) cofactor. The sequence is that of Probable molybdenum cofactor guanylyltransferase from Staphylococcus carnosus (strain TM300).